The chain runs to 67 residues: Large ribosomal subunit protein uL29 (67 aa).

It belongs to the universal ribosomal protein uL29 family.

The chain is Large ribosomal subunit protein uL29 from Wolbachia sp. subsp. Drosophila simulans (strain wRi).